Here is a 239-residue protein sequence, read N- to C-terminus: tRNA (guanine-N(7)-)-methyltransferase (239 aa).

Positions 69, 94, 121, and 144 each coordinate S-adenosyl-L-methionine. Asp144 is an active-site residue. Lys148 contacts substrate. The tract at residues 150–155 (RHNKRR) is interaction with RNA. Residues Asp180 and 217-220 (TKFE) contribute to the substrate site.

This sequence belongs to the class I-like SAM-binding methyltransferase superfamily. TrmB family. As to quaternary structure, monomer.

It catalyses the reaction guanosine(46) in tRNA + S-adenosyl-L-methionine = N(7)-methylguanosine(46) in tRNA + S-adenosyl-L-homocysteine. It participates in tRNA modification; N(7)-methylguanine-tRNA biosynthesis. Functionally, catalyzes the formation of N(7)-methylguanine at position 46 (m7G46) in tRNA. The polypeptide is tRNA (guanine-N(7)-)-methyltransferase (Salmonella paratyphi A (strain ATCC 9150 / SARB42)).